A 283-amino-acid chain; its full sequence is Homeobox protein Hox-A9a (283 aa).

Disordered regions lie at residues Val-25–Ser-54 and Glu-162–Gly-181. Residues Thr-216–Asn-275 constitute a DNA-binding region (homeobox).

Belongs to the Abd-B homeobox family.

Its subcellular location is the nucleus. Sequence-specific transcription factor which is part of a developmental regulatory system that provides cells with specific positional identities on the anterior-posterior axis. This chain is Homeobox protein Hox-A9a (hoxa9a), found in Takifugu rubripes (Japanese pufferfish).